The sequence spans 37 residues: MKVKPSVKQICDKCKVIRRNGRVMVICENPRHKQRQG.

The protein belongs to the bacterial ribosomal protein bL36 family.

The sequence is that of Large ribosomal subunit protein bL36B from Paenarthrobacter aurescens (strain TC1).